The primary structure comprises 367 residues: Leu/Ile/Val-binding protein BraC3 (367 aa).

Residues 1–22 (MTLKTLTATLVASLAFAPLAHA) form the signal peptide.

The protein belongs to the leucine-binding protein family. As to quaternary structure, the complex is composed of two ATP-binding proteins (BraF and BraG), two transmembrane proteins (BraD and BraE) and a solute-binding protein (BraC or BraC3).

The protein localises to the periplasm. Functionally, part of the ABC transporter complex BraDEFGC/C3 involved in transport of branched-chain amino acids Leu, Ile and Val (LIV). Essential for the development of bacteroids, the differentiated legume-symbiotic forms of this bacterium, and for the effective N(2) fixation by them. The sequence is that of Leu/Ile/Val-binding protein BraC3 from Rhizobium johnstonii (strain DSM 114642 / LMG 32736 / 3841) (Rhizobium leguminosarum bv. viciae).